Here is a 292-residue protein sequence, read N- to C-terminus: Phosphatidylglycerol--prolipoprotein diacylglyceryl transferase (292 aa).

7 helical membrane-spanning segments follow: residues 21 to 41 (VSLH…MWLA), 60 to 80 (LLYA…VLFY), 98 to 118 (GGMS…VFAH), 124 to 144 (FFQV…AGRL), 198 to 218 (SQLY…NLFI), 225 to 245 (GAVS…VEFF), and 258 to 278 (ISMG…MMIW). An a 1,2-diacyl-sn-glycero-3-phospho-(1'-sn-glycerol)-binding site is contributed by Arg143.

Belongs to the Lgt family.

The protein localises to the cell inner membrane. The catalysed reaction is L-cysteinyl-[prolipoprotein] + a 1,2-diacyl-sn-glycero-3-phospho-(1'-sn-glycerol) = an S-1,2-diacyl-sn-glyceryl-L-cysteinyl-[prolipoprotein] + sn-glycerol 1-phosphate + H(+). It functions in the pathway protein modification; lipoprotein biosynthesis (diacylglyceryl transfer). Its function is as follows. Catalyzes the transfer of the diacylglyceryl group from phosphatidylglycerol to the sulfhydryl group of the N-terminal cysteine of a prolipoprotein, the first step in the formation of mature lipoproteins. The protein is Phosphatidylglycerol--prolipoprotein diacylglyceryl transferase of Erwinia tasmaniensis (strain DSM 17950 / CFBP 7177 / CIP 109463 / NCPPB 4357 / Et1/99).